Consider the following 133-residue polypeptide: Nickel-responsive regulator (133 aa).

Ni(2+) contacts are provided by His-76, His-87, His-89, and Cys-95.

Belongs to the transcriptional regulatory CopG/NikR family. In terms of assembly, homotetramer. Ni(2+) is required as a cofactor.

Functionally, transcriptional repressor of the nikABCDE operon. Is active in the presence of excessive concentrations of intracellular nickel. The sequence is that of Nickel-responsive regulator from Escherichia coli (strain SMS-3-5 / SECEC).